We begin with the raw amino-acid sequence, 493 residues long: Glutamyl-tRNA(Gln) amidotransferase subunit A (493 aa).

Catalysis depends on charge relay system residues K79 and S159. S183 acts as the Acyl-ester intermediate in catalysis.

It belongs to the amidase family. GatA subfamily. Heterotrimer of A, B and C subunits.

The enzyme catalyses L-glutamyl-tRNA(Gln) + L-glutamine + ATP + H2O = L-glutaminyl-tRNA(Gln) + L-glutamate + ADP + phosphate + H(+). Its function is as follows. Allows the formation of correctly charged Gln-tRNA(Gln) through the transamidation of misacylated Glu-tRNA(Gln) in organisms which lack glutaminyl-tRNA synthetase. The reaction takes place in the presence of glutamine and ATP through an activated gamma-phospho-Glu-tRNA(Gln). In Agrobacterium fabrum (strain C58 / ATCC 33970) (Agrobacterium tumefaciens (strain C58)), this protein is Glutamyl-tRNA(Gln) amidotransferase subunit A.